Consider the following 107-residue polypeptide: Large ribosomal subunit protein uL23 (107 aa).

This sequence belongs to the universal ribosomal protein uL23 family. In terms of assembly, part of the 50S ribosomal subunit. Contacts protein L29, and trigger factor when it is bound to the ribosome.

Functionally, one of the early assembly proteins it binds 23S rRNA. One of the proteins that surrounds the polypeptide exit tunnel on the outside of the ribosome. Forms the main docking site for trigger factor binding to the ribosome. The polypeptide is Large ribosomal subunit protein uL23 (Rhodopirellula baltica (strain DSM 10527 / NCIMB 13988 / SH1)).